Reading from the N-terminus, the 100-residue chain is Integration host factor subunit alpha (100 aa).

Residues 53–72 are disordered; the sequence is FDLRDKKQRPGRNPKTGEEI.

This sequence belongs to the bacterial histone-like protein family. In terms of assembly, heterodimer of an alpha and a beta chain.

This protein is one of the two subunits of integration host factor, a specific DNA-binding protein that functions in genetic recombination as well as in transcriptional and translational control. The sequence is that of Integration host factor subunit alpha from Marinobacter nauticus (strain ATCC 700491 / DSM 11845 / VT8) (Marinobacter aquaeolei).